The sequence spans 871 residues: Transient receptor potential cation channel subfamily V member 4 (871 aa).

Disordered stretches follow at residues M1–R68 and Y110–P143. The Cytoplasmic portion of the chain corresponds to M1–V469. A Phosphotyrosine; by SRC-type Tyr-kinases modification is found at Y110. Residues H116–E129 are compositionally biased toward basic and acidic residues. ATP is bound by residues K192, K197, N201, Y236 to Q239, and R248. ANK repeat units lie at residues R237–A266 and F284–D313. R249–K251 lines the a 1,2-diacyl-sn-glycero-3-phospho-(1D-myo-inositol-4,5-bisphosphate) pocket. Phosphotyrosine; by LYN is present on Y253. A 1,2-diacyl-sn-glycero-3-phospho-(1D-myo-inositol-4,5-bisphosphate) is bound by residues N296–H299 and K344. The stretch at D369 to D398 is one ANK 3 repeat. Residues S470–Y490 form a helical membrane-spanning segment. The Extracellular segment spans residues Y491–D507. Residues Y508–T534 form a helical membrane-spanning segment. Topologically, residues K535–G547 are cytoplasmic. The chain crosses the membrane as a helical span at residues S548–L568. Over A569–E572 the chain is Extracellular. Residues A573–T593 traverse the membrane as a helical segment. The Cytoplasmic portion of the chain corresponds to R594 to K608. A helical membrane pass occupies residues I609–L636. Residues N637 to T665 lie on the Extracellular side of the membrane. N-linked (GlcNAc...) asparagine glycosylation is present at N651. Positions F666–M685 form an intramembrane region, pore-forming. The Selectivity filter signature appears at G679–D682. D682 is a Ca(2+) binding site. The Extracellular portion of the chain corresponds to L686–V693. A helical membrane pass occupies residues V694–V722. Residues G723 to L871 are Cytoplasmic-facing. Y805 carries the post-translational modification Phosphotyrosine; by SRC-type Tyr-kinases. The interval H812–E831 is interaction with calmodulin and ITPR3. S824 is subject to Phosphoserine; by PKC and PKA. Positions N850–L871 are disordered.

Belongs to the transient receptor (TC 1.A.4) family. TrpV subfamily. TRPV4 sub-subfamily. In terms of assembly, homotetramer. Interacts with calmodulin. Interacts with CTNNB1. The TRPV4 and CTNNB1 complex can interact with CDH1. Part of a complex containing MLC1, AQP4, HEPACAM and ATP1B1. Interacts with MAP7 and Src family Tyr protein kinases LYN, SRC, FYN, HCK, LCK and YES. Interacts with PACSIN1, PACSIN2 and PACSIN3 (via SH3 domain). Interacts with ITPR3. Interacts with AQP5; the interaction is probably indirect and regulates TRPV4 activation by hypotonicity. Interacts with ANO1. Interacts (via C-terminus) with PKD2 (via C-terminus). Interacts with DDX3X; this interaction is decreased when the channel is activated. In terms of processing, N-glycosylated. As to expression, detected in liver, kidney, heart, brain cortex, cerebellum and brainstem (at protein level). Expressed in salivary glands (at protein level). Expressed in heart, lung, spleen, liver, kidney, brain, skeletal muscle and testis. In the central nervous system, expressed in the lamina terminalis (arched vascular organ and neurons of the subfornical organ), median preoptic area, ventral hippocampal commissure, and ependymal cells of the choroid plexus. In the cochlea, expressed in both inner and outer hair cells, and in marginal cells of the cochlear stria vascularis. Expressed in large neurons of the trigeminal ganglion. In the kidney cortex, strongly expressed by epithelial cells of tubules and much weaker in glomeruli.

It is found in the cell membrane. The protein localises to the apical cell membrane. It localises to the cell junction. The protein resides in the adherens junction. Its subcellular location is the cell projection. It is found in the cilium. The catalysed reaction is Ca(2+)(in) = Ca(2+)(out). Its function is as follows. Non-selective calcium permeant cation channel involved in osmotic sensitivity and mechanosensitivity. Activation by exposure to hypotonicity within the physiological range exhibits an outward rectification. Also activated by heat, low pH, citrate and phorbol esters. Increase of intracellular Ca(2+) potentiates currents. Channel activity seems to be regulated by a calmodulin-dependent mechanism with a negative feedback mechanism. Acts as a regulator of intracellular Ca(2+) in synoviocytes. Plays an obligatory role as a molecular component in the nonselective cation channel activation induced by 4-alpha-phorbol 12,13-didecanoate and hypotonic stimulation in synoviocytes and also regulates production of IL-8. Together with PKD2, forms mechano- and thermosensitive channels in cilium. Promotes cell-cell junction formation in skin keratinocytes and plays an important role in the formation and/or maintenance of functional intercellular barriers. Negatively regulates expression of PPARGC1A, UCP1, oxidative metabolism and respiration in adipocytes. Regulates expression of chemokines and cytokines related to pro-inflammatory pathway in adipocytes. Together with AQP5, controls regulatory volume decrease in salivary epithelial cells. Required for normal development and maintenance of bone and cartilage. In its inactive state, may sequester DDX3X at the plasma membrane. When activated, the interaction between both proteins is affected and DDX3X relocalizes to the nucleus. In neurons of the central nervous system, could play a role in triggering voluntary water intake in response to increased sodium concentration in body fluid. The protein is Transient receptor potential cation channel subfamily V member 4 (Trpv4) of Mus musculus (Mouse).